The sequence spans 246 residues: Probable aquaporin AqpM (246 aa).

Over 1–12 the chain is Cytoplasmic; that stretch reads MTMTLAKRFTAE. A helical membrane pass occupies residues 13 to 33; that stretch reads VVGTFILVFFGPGAAVITLMI. At 34–56 the chain is on the extracellular side; that stretch reads ANGADKPNEFNIGIGALGGLGDW. A helical transmembrane segment spans residues 57 to 77; the sequence is FAIGMAFALAIAAVIYSLGRI. Topologically, residues 78 to 104 are cytoplasmic; the sequence is SGAHINPAVTIALWSIGRFPGREVVPY. Residues 83–85 carry the NPA 1 motif; sequence NPA. A helical membrane pass occupies residues 105-125; that stretch reads IVAQFIGAALGSLLFLACVGP. The Extracellular segment spans residues 126–146; it reads AAATVGGLGATAPFPGIGYGQ. A helical transmembrane segment spans residues 147–167; it reads AILTEAIGTFLLMLVIMGVAV. The Cytoplasmic portion of the chain corresponds to 168–173; the sequence is DERAPP. Residues 174–194 traverse the membrane as a helical segment; sequence GFAGLVIGLTVGGIITTIGNI. Topologically, residues 195-217 are extracellular; the sequence is TGSSLNPARTFGPYLGDSLMGIN. The NPA 2 signature appears at 200–202; sequence NPA. A helical transmembrane segment spans residues 218–238; that stretch reads LWQYFPIYVIGPIVGAVAAAW. Topologically, residues 239–246 are cytoplasmic; that stretch reads LYNYLAKE.

It belongs to the MIP/aquaporin (TC 1.A.8) family.

The protein localises to the cell membrane. Its function is as follows. Channel that permits osmotically driven movement of water in both directions. The polypeptide is Probable aquaporin AqpM (aqpM) (Archaeoglobus fulgidus (strain ATCC 49558 / DSM 4304 / JCM 9628 / NBRC 100126 / VC-16)).